The sequence spans 92 residues: Small ribosomal subunit protein uS19 (92 aa).

Belongs to the universal ribosomal protein uS19 family.

Its function is as follows. Protein S19 forms a complex with S13 that binds strongly to the 16S ribosomal RNA. The chain is Small ribosomal subunit protein uS19 from Acidovorax sp. (strain JS42).